The following is a 121-amino-acid chain: Non-specific lipid-transfer protein 3 (121 aa).

A signal peptide spans 1–28 (MAGARRTMALVALVAVVAAAVVAERASA). Intrachain disulfides connect C32-C80, C42-C57, C58-C103, and C78-C117.

Belongs to the plant LTP family.

Its function is as follows. Plant non-specific lipid-transfer proteins transfer phospholipids as well as galactolipids across membranes. May play a role in wax or cutin deposition in the cell walls of expanding epidermal cells and certain secretory tissues. May possess an antifungal activity and protect the plant against pathogens. This is Non-specific lipid-transfer protein 3 (LTP110-A) from Oryza sativa subsp. indica (Rice).